The chain runs to 487 residues: Transcriptional adapter ADA2b (487 aa).

Over residues 1-13 (MGRSRGNFQNFED) the composition is skewed to polar residues. The interval 1-25 (MGRSRGNFQNFEDPTQRTRKKKNAA) is disordered. The ZZ-type zinc-finger motif lies at 42-98 (GGKYNCDYCQKDITGKIRIKCAVCPDFDLCIECMSVGAEITPHKCDHPYRVMGNLTF). Zn(2+)-binding residues include cysteine 47, cysteine 50, cysteine 62, cysteine 65, cysteine 71, cysteine 74, histidine 84, and histidine 88. Residues 100 to 152 (LICPDWSADDEMLLLEGLEIYGLGNWAEVAEHVGTKSKEQCLEHYRNIYLNSP) form the SANT domain. Lysine 216 bears the N6-acetyllysine; by GCN5 mark. Residues 368-383 (RKRKRENEEGMNRGKE) are compositionally biased toward basic and acidic residues. The segment at 368–388 (RKRKRENEEGMNRGKESGQFG) is disordered. Residues 401–487 (QASSSYVNDL…MLVKKGIAQL (87 aa)) enclose the SWIRM domain.

In terms of assembly, interacts in vitro with the HAT domain of GCN5 and with the DNA-binding domain of the transcriptional activator DREB1B/CBF1. Interacts with BZIP11. Post-translationally, acetylated in vitro by GCN5, but acetylation is not essential for biological activity. As to expression, expressed in roots, leaves, stems, flowers and siliques, with the strongest activity in the meristematic zones.

It localises to the nucleus. Its function is as follows. Required for the function of some acidic activation domains, which activate transcription from a distant site. The exact mechanism of action is not yet known. ADA2 stimulates the acetyltransferase activity of GCN5 on free histones or nucleosomes, probably by opening up the promoter region. Mediates auxin and cytokinin signals in the control of cell proliferation and might be involved in repression of a freezing tolerance pathway at warm temperature. Involved in the positive regulation of salt-induced gene expression by maintaining locus-specific acetylation of histones H4 and H3. The sequence is that of Transcriptional adapter ADA2b (ADA2B) from Arabidopsis thaliana (Mouse-ear cress).